The primary structure comprises 140 residues: Beta/delta-urticatoxin-De2a (140 aa).

The N-terminal stretch at 1–18 (MKTSTALVLLLALTATSA) is a signal peptide. Positions 19-78 (SSGDHQFIDEQNIMNVAEGKNVISSLSSSGGGDDAAAIMESVLVNGGNRKMVFMMVSGSQ) are excised as a propeptide. 6 disulfides stabilise this stretch: Cys81/Cys95, Cys88/Cys100, Cys94/Cys108, Cys113/Cys127, Cys120/Cys131, and Cys126/Cys139.

Belongs to the urticatoxin-2 family. In terms of tissue distribution, expressed in trichomes, that are stiff epidermal hairs located on the surface of petioles and leaves.

Its subcellular location is the secreted. In terms of biological role, plant defense neurotoxin that causes pain and systemic symptoms in mammals via modulation of voltage-gated sodium channels (Nav). Potent modulator of human Nav1.5/SCN5A (EC(50)=55 nM), Nav1.6/SCN8A (EC(50)=0.86 nM), and Nav1.7/SCN9A (EC(50)=208 nM), where it shifts the activation threshold to more negative potentials and delays fast inactivation. Also shifts the voltage-dependence of steady-state fast inactivation of Nav1.6/SCN8A, but not that of Nav1.5/SCN5A or Nav1.7/SCN9A. On Nav1.7/SCN9A, principally acts by binding to extracellular loops of domain IV (Nav site 3). In vivo, intraplantar injection into mice causes numerous dose-dependent, immediate, and long-lasting spontaneous pain behaviors, while no swelling is observed in the injected paw. At the highest doses tested, systemic symptoms including hypokinesia and hypersalivation are observed. The sequence is that of Beta/delta-urticatoxin-De2a from Dendrocnide excelsa (Giant stinging tree).